Consider the following 252-residue polypeptide: Probable transcriptional regulator SauR (252 aa).

Positions 6 to 68 constitute an HTH iclR-type domain; that stretch reads NAAAVRAFRI…AGNRHYECSS (63 aa). Residues 28 to 47 constitute a DNA-binding region (H-T-H motif); that stretch reads LAAIVQAIELPKQTVHRILK. In terms of domain architecture, IclR-ED spans 83-252; sequence PAAARHAILQ…ADEMVKTFCE (170 aa).

Functionally, may regulate transcription of the sauSTU operon. This Cupriavidus necator (strain ATCC 17699 / DSM 428 / KCTC 22496 / NCIMB 10442 / H16 / Stanier 337) (Ralstonia eutropha) protein is Probable transcriptional regulator SauR (sauR).